A 265-amino-acid polypeptide reads, in one-letter code: Cytochrome c oxidase subunit 3 (265 aa).

6 consecutive transmembrane segments (helical) span residues 41–61 (GGATLLSLGLIFILYTMFVWW), 85–105 (GFILFIVSEVMFFFAFFWAFF), 137–157 (TLILLSSGAAVTWAHHAILAG), 162–182 (AVYALVATVLLALVFTGFQGM), 200–220 (FFLATGFHGFHVIIGTLFLIV), and 245–265 (WHFVDVVWLFLFVSIYWWGGI).

This sequence belongs to the cytochrome c oxidase subunit 3 family. As to quaternary structure, component of the cytochrome c oxidase (complex IV, CIV), a multisubunit enzyme composed of a catalytic core of 3 subunits and several supernumerary subunits. The complex exists as a monomer or a dimer and forms supercomplexes (SCs) in the inner mitochondrial membrane with ubiquinol-cytochrome c oxidoreductase (cytochrome b-c1 complex, complex III, CIII).

The protein localises to the mitochondrion inner membrane. It catalyses the reaction 4 Fe(II)-[cytochrome c] + O2 + 8 H(+)(in) = 4 Fe(III)-[cytochrome c] + 2 H2O + 4 H(+)(out). Component of the cytochrome c oxidase, the last enzyme in the mitochondrial electron transport chain which drives oxidative phosphorylation. The respiratory chain contains 3 multisubunit complexes succinate dehydrogenase (complex II, CII), ubiquinol-cytochrome c oxidoreductase (cytochrome b-c1 complex, complex III, CIII) and cytochrome c oxidase (complex IV, CIV), that cooperate to transfer electrons derived from NADH and succinate to molecular oxygen, creating an electrochemical gradient over the inner membrane that drives transmembrane transport and the ATP synthase. Cytochrome c oxidase is the component of the respiratory chain that catalyzes the reduction of oxygen to water. Electrons originating from reduced cytochrome c in the intermembrane space (IMS) are transferred via the dinuclear copper A center (CU(A)) of subunit 2 and heme A of subunit 1 to the active site in subunit 1, a binuclear center (BNC) formed by heme A3 and copper B (CU(B)). The BNC reduces molecular oxygen to 2 water molecules using 4 electrons from cytochrome c in the IMS and 4 protons from the mitochondrial matrix. This Triticum aestivum (Wheat) protein is Cytochrome c oxidase subunit 3 (COX3).